A 273-amino-acid polypeptide reads, in one-letter code: Ribosomal RNA small subunit methyltransferase A (273 aa).

Asn-17, Leu-19, Gly-44, Glu-65, and Asn-111 together coordinate S-adenosyl-L-methionine.

This sequence belongs to the class I-like SAM-binding methyltransferase superfamily. rRNA adenine N(6)-methyltransferase family. RsmA subfamily.

It is found in the cytoplasm. The catalysed reaction is adenosine(1518)/adenosine(1519) in 16S rRNA + 4 S-adenosyl-L-methionine = N(6)-dimethyladenosine(1518)/N(6)-dimethyladenosine(1519) in 16S rRNA + 4 S-adenosyl-L-homocysteine + 4 H(+). In terms of biological role, specifically dimethylates two adjacent adenosines (A1518 and A1519) in the loop of a conserved hairpin near the 3'-end of 16S rRNA in the 30S particle. May play a critical role in biogenesis of 30S subunits. This chain is Ribosomal RNA small subunit methyltransferase A, found in Buchnera aphidicola subsp. Acyrthosiphon pisum (strain APS) (Acyrthosiphon pisum symbiotic bacterium).